The primary structure comprises 89 residues: YcgL domain-containing protein Asuc_1390 (89 aa).

Residues 1–85 (MLCAIYKSKK…KDDWLFTIEK (85 aa)) form the YcgL domain.

The polypeptide is YcgL domain-containing protein Asuc_1390 (Actinobacillus succinogenes (strain ATCC 55618 / DSM 22257 / CCUG 43843 / 130Z)).